A 588-amino-acid chain; its full sequence is MELKNKVSNLPSKPGCYLYLNKDKHVIYVGKAKNLKKRVSSYFDRAQNLKTTRLVREIADLEYFVVSNEKESLLLEENLIKKYRPKYNVLLNDDKAYPYIIITNEKDPTYKYVRKLDKKAFRSFGPLPIGSNARETLITLQRLFPLRRCKGNLGKPCLHYFIGQCSGACFKEVNKEYYQEQIKRVDNFFKGNINEVKTLLTNQMHKAAENLQFEEAQRIKEQIISLDFTTTKQNVEFKSQTDVDVISYFIEDEKIAIVTLFYRSGKLLFKDEHIQLYFEQDITDLIDSFMSQIYDKNILPDKIIVDNEVELFDLNEKYKSISTHPIKEDEKIIYKLATENAQEAIRKSKISTTINIGNENELLLELQEKANLQKEPYRLEMFDISNIGNEFIVGSCVVYINGKPARNEFRKYNIESKFTSDYDRLKEMLYRRFQKALIEKRMLPDLIIMDGGIIQIHAAKEIINALGLSEIQVIGLVKDEHHNTSFLIDTNEEQVIIKDKPKLFNWLSSIQVRVDEYAKSGFRKKQNNSFLKSDLEQIEGLGKKRIQDLFKKFNTINEIESADQEELFKILKNKKALDNLNIYLKNRK.

In terms of domain architecture, GIY-YIG spans S12–V89. A UVR domain is found at N194–T229.

This sequence belongs to the UvrC family. Interacts with UvrB in an incision complex.

The protein localises to the cytoplasm. The UvrABC repair system catalyzes the recognition and processing of DNA lesions. UvrC both incises the 5' and 3' sides of the lesion. The N-terminal half is responsible for the 3' incision and the C-terminal half is responsible for the 5' incision. This is UvrABC system protein C from Mesoplasma florum (strain ATCC 33453 / NBRC 100688 / NCTC 11704 / L1) (Acholeplasma florum).